We begin with the raw amino-acid sequence, 82 residues long: Small ribosomal subunit protein eS27B (82 aa).

A C4-type zinc finger spans residues 37-59 (CPGCLNITTVFSHAQTAVTCESC).

It belongs to the eukaryotic ribosomal protein eS27 family. In terms of assembly, component of the small ribosomal subunit (SSU). Mature yeast ribosomes consist of a small (40S) and a large (60S) subunit. The 40S small subunit contains 1 molecule of ribosomal RNA (18S rRNA) and 33 different proteins (encoded by 57 genes). The large 60S subunit contains 3 rRNA molecules (25S, 5.8S and 5S rRNA) and 46 different proteins (encoded by 81 genes). Requires Zn(2+) as cofactor. Post-translationally, the N-terminus is not modified.

It is found in the cytoplasm. In terms of biological role, component of the ribosome, a large ribonucleoprotein complex responsible for the synthesis of proteins in the cell. The small ribosomal subunit (SSU) binds messenger RNAs (mRNAs) and translates the encoded message by selecting cognate aminoacyl-transfer RNA (tRNA) molecules. The large subunit (LSU) contains the ribosomal catalytic site termed the peptidyl transferase center (PTC), which catalyzes the formation of peptide bonds, thereby polymerizing the amino acids delivered by tRNAs into a polypeptide chain. The nascent polypeptides leave the ribosome through a tunnel in the LSU and interact with protein factors that function in enzymatic processing, targeting, and the membrane insertion of nascent chains at the exit of the ribosomal tunnel. The sequence is that of Small ribosomal subunit protein eS27B from Saccharomyces cerevisiae (strain ATCC 204508 / S288c) (Baker's yeast).